A 230-amino-acid polypeptide reads, in one-letter code: MKLLILTCLVAVALARPKYPLRYPEVFQNEPDSIEEVLNKRKILELAVVSPIQFRQENIDELKDTRNEPTEDHIMEDTERKESGSSSSEEVVSSTTEQKDILKEDMPSQRYLEELHRLNKYKLLQLEAIRDQKLIPRVKLSSHPYLEQLYRINEDNHPQLGEPVKVVTQEQAYFHLEPFPQFFQLGASPYVAWYYPPQVMQYIAHPSSYDTPEGIASEDGGKTDVMPQWW.

An N-terminal signal peptide occupies residues 1–15 (MKLLILTCLVAVALA). Phosphoserine is present on residues Ser33, Ser83, Ser85, Ser86, Ser87, and Ser88. The span at 60–83 (DELKDTRNEPTEDHIMEDTERKES) shows a compositional bias: basic and acidic residues. Disordered regions lie at residues 60 to 103 (DELK…DILK) and 211 to 230 (TPEG…PQWW). The span at 84 to 96 (GSSSSEEVVSSTT) shows a compositional bias: low complexity.

It belongs to the alpha-casein family. As to expression, mammary gland specific. Secreted in milk.

It localises to the secreted. Its function is as follows. Important role in the capacity of milk to transport calcium phosphate. This chain is Alpha-S1-casein (CSN1S1), found in Camelus dromedarius (Dromedary).